The following is a 241-amino-acid chain: 1-(5-phosphoribosyl)-5-[(5-phosphoribosylamino)methylideneamino] imidazole-4-carboxamide isomerase (241 aa).

The active-site Proton acceptor is D8. D129 acts as the Proton donor in catalysis.

The protein belongs to the HisA/HisF family.

The protein resides in the cytoplasm. The catalysed reaction is 1-(5-phospho-beta-D-ribosyl)-5-[(5-phospho-beta-D-ribosylamino)methylideneamino]imidazole-4-carboxamide = 5-[(5-phospho-1-deoxy-D-ribulos-1-ylimino)methylamino]-1-(5-phospho-beta-D-ribosyl)imidazole-4-carboxamide. Its pathway is amino-acid biosynthesis; L-histidine biosynthesis; L-histidine from 5-phospho-alpha-D-ribose 1-diphosphate: step 4/9. This Novosphingobium aromaticivorans (strain ATCC 700278 / DSM 12444 / CCUG 56034 / CIP 105152 / NBRC 16084 / F199) protein is 1-(5-phosphoribosyl)-5-[(5-phosphoribosylamino)methylideneamino] imidazole-4-carboxamide isomerase.